We begin with the raw amino-acid sequence, 162 residues long: Beta-lactoglobulin-1 (162 aa).

2 disulfides stabilise this stretch: C66–C160 and C106–C119.

This sequence belongs to the calycin superfamily. Lipocalin family. As to quaternary structure, monomer. In terms of tissue distribution, synthesized in mammary gland and secreted in milk.

It localises to the secreted. In terms of biological role, primary component of whey, it binds retinol and is probably involved in the transport of that molecule. The protein is Beta-lactoglobulin-1 (LGB1) of Equus asinus (Donkey).